The sequence spans 127 residues: Small ribosomal subunit protein uS11 (127 aa).

This sequence belongs to the universal ribosomal protein uS11 family. Part of the 30S ribosomal subunit. Interacts with proteins S7 and S18. Binds to IF-3.

In terms of biological role, located on the platform of the 30S subunit, it bridges several disparate RNA helices of the 16S rRNA. Forms part of the Shine-Dalgarno cleft in the 70S ribosome. This Streptococcus gordonii (strain Challis / ATCC 35105 / BCRC 15272 / CH1 / DL1 / V288) protein is Small ribosomal subunit protein uS11.